The sequence spans 273 residues: NADPH-dependent 7-cyano-7-deazaguanine reductase (273 aa).

Residue 81–83 participates in substrate binding; it reads VES. 83–84 is a binding site for NADPH; the sequence is SK. Residue cysteine 179 is the Thioimide intermediate of the active site. Catalysis depends on aspartate 186, which acts as the Proton donor. Residue 218–219 coordinates substrate; that stretch reads AE. Residue 247–248 participates in NADPH binding; sequence RG.

The protein belongs to the GTP cyclohydrolase I family. QueF type 2 subfamily. Homodimer.

The protein localises to the cytoplasm. It catalyses the reaction 7-aminomethyl-7-carbaguanine + 2 NADP(+) = 7-cyano-7-deazaguanine + 2 NADPH + 3 H(+). It functions in the pathway tRNA modification; tRNA-queuosine biosynthesis. In terms of biological role, catalyzes the NADPH-dependent reduction of 7-cyano-7-deazaguanine (preQ0) to 7-aminomethyl-7-deazaguanine (preQ1). The protein is NADPH-dependent 7-cyano-7-deazaguanine reductase of Rickettsia akari (strain Hartford).